The sequence spans 173 residues: Crossover junction endodeoxyribonuclease RuvC (173 aa).

Active-site residues include aspartate 11, glutamate 71, and aspartate 143. Mg(2+) is bound by residues aspartate 11, glutamate 71, and aspartate 143.

This sequence belongs to the RuvC family. In terms of assembly, homodimer which binds Holliday junction (HJ) DNA. The HJ becomes 2-fold symmetrical on binding to RuvC with unstacked arms; it has a different conformation from HJ DNA in complex with RuvA. In the full resolvosome a probable DNA-RuvA(4)-RuvB(12)-RuvC(2) complex forms which resolves the HJ. Mg(2+) serves as cofactor.

It is found in the cytoplasm. It catalyses the reaction Endonucleolytic cleavage at a junction such as a reciprocal single-stranded crossover between two homologous DNA duplexes (Holliday junction).. Its function is as follows. The RuvA-RuvB-RuvC complex processes Holliday junction (HJ) DNA during genetic recombination and DNA repair. Endonuclease that resolves HJ intermediates. Cleaves cruciform DNA by making single-stranded nicks across the HJ at symmetrical positions within the homologous arms, yielding a 5'-phosphate and a 3'-hydroxyl group; requires a central core of homology in the junction. The consensus cleavage sequence is 5'-(A/T)TT(C/G)-3'. Cleavage occurs on the 3'-side of the TT dinucleotide at the point of strand exchange. HJ branch migration catalyzed by RuvA-RuvB allows RuvC to scan DNA until it finds its consensus sequence, where it cleaves and resolves the cruciform DNA. The protein is Crossover junction endodeoxyribonuclease RuvC of Brucella suis biovar 1 (strain 1330).